The sequence spans 43 residues: Methionine aminopeptidase (43 aa).

It belongs to the peptidase M24A family. Methionine aminopeptidase type 1 subfamily. In terms of assembly, monomer. The cofactor is Co(2+). Zn(2+) serves as cofactor. Requires Mn(2+) as cofactor. Fe(2+) is required as a cofactor.

It carries out the reaction Release of N-terminal amino acids, preferentially methionine, from peptides and arylamides.. In terms of biological role, removes the N-terminal methionine from nascent proteins. The N-terminal methionine is often cleaved when the second residue in the primary sequence is small and uncharged (Met-Ala-, Cys, Gly, Pro, Ser, Thr, or Val). Requires deformylation of the N(alpha)-formylated initiator methionine before it can be hydrolyzed. This chain is Methionine aminopeptidase (map), found in Klebsiella oxytoca.